The chain runs to 312 residues: Beta-ketoacyl-[acyl-carrier-protein] synthase III (312 aa).

Catalysis depends on residues C112 and H237. Residues 238–242 (QANIR) form an ACP-binding region. The active site involves N267.

Belongs to the thiolase-like superfamily. FabH family. In terms of assembly, homodimer.

Its subcellular location is the cytoplasm. The enzyme catalyses malonyl-[ACP] + acetyl-CoA + H(+) = 3-oxobutanoyl-[ACP] + CO2 + CoA. The protein operates within lipid metabolism; fatty acid biosynthesis. Its function is as follows. Catalyzes the condensation reaction of fatty acid synthesis by the addition to an acyl acceptor of two carbons from malonyl-ACP. Catalyzes the first condensation reaction which initiates fatty acid synthesis and may therefore play a role in governing the total rate of fatty acid production. Possesses both acetoacetyl-ACP synthase and acetyl transacylase activities. Its substrate specificity determines the biosynthesis of branched-chain and/or straight-chain of fatty acids. The protein is Beta-ketoacyl-[acyl-carrier-protein] synthase III of Oceanobacillus iheyensis (strain DSM 14371 / CIP 107618 / JCM 11309 / KCTC 3954 / HTE831).